Consider the following 119-residue polypeptide: NADH-quinone oxidoreductase subunit A (119 aa).

3 helical membrane-spanning segments follow: residues I9–I29, L63–V83, and I88–I108.

The protein belongs to the complex I subunit 3 family. In terms of assembly, NDH-1 is composed of 14 different subunits. Subunits NuoA, H, J, K, L, M, N constitute the membrane sector of the complex.

It localises to the cell inner membrane. The catalysed reaction is a quinone + NADH + 5 H(+)(in) = a quinol + NAD(+) + 4 H(+)(out). Its function is as follows. NDH-1 shuttles electrons from NADH, via FMN and iron-sulfur (Fe-S) centers, to quinones in the respiratory chain. The immediate electron acceptor for the enzyme in this species is believed to be ubiquinone. Couples the redox reaction to proton translocation (for every two electrons transferred, four hydrogen ions are translocated across the cytoplasmic membrane), and thus conserves the redox energy in a proton gradient. The chain is NADH-quinone oxidoreductase subunit A from Albidiferax ferrireducens (strain ATCC BAA-621 / DSM 15236 / T118) (Rhodoferax ferrireducens).